A 324-amino-acid chain; its full sequence is T-cell acute lymphocytic leukemia protein 1 homolog (324 aa).

The disordered stretch occupies residues Met1 to Leu49. The region spanning Val185 to Leu237 is the bHLH domain. The interval Ser276 to Arg324 is disordered.

Expressed in hemopoietic and endothelial lineages. Isoform beta emerges first, expressing in the entire anterior and posterior lateral mesoderm (ALM and PLM respectively), and in the ventral wall of the dorsal aorta, where definitive hemopoiesis begins. Isoform alpha expresses later as two pairs of stripes in the PLM and ALM, and becomes restricted to the intermediate cell mass (ICM) by the 18-somite stage. The ICM is the key site of primitive hemopoiesis, giving rise to the erythroid lineage. Also expressed in all stages of endocardial cell migration and in the developing midbrain, hindbrain and spinal cord. In adults, expressed in the main hemopoietic organs, namely the kidney (where isoform alpha is the predominant isoform) and the spleen. Also expressed in the liver, gill and gonads.

It localises to the nucleus. Functionally, transcription factor that plays a pivotal role in hemopoietic and endothelial development, acting synergistically with lmo2 and downstream of clo. Specifies mesodermal precursors to a hemangioblast cell fate. Hemangioblasts are bipotential precursors of blood and endothelium, and in the absence of hemopoietic induction cues such as gata1, tal1/scl-lmo2-induced hemangioblasts differentiate into endothelial cells. Isoform alpha and isoform beta are redundant for the initiation of primitive hemopoiesis but have distinct roles in the regulation of primitive erythroid differentiation and definitive hemopoietic stem cell specification, most likely due to differences in expression levels. Specification of definitive hemopoietic stem cells requires isoform beta. DNA binding is required for erythroid maturation, but not for its other hemopoietic functions. Endothelial roles include development of the dorsal aorta, the site of definitive hemopoiesis in the embryo. Required for angiogenesis but not angioblast specification. Has an additional role in endocardium formation during heart development. May play a role in central nervous system development. The protein is T-cell acute lymphocytic leukemia protein 1 homolog of Danio rerio (Zebrafish).